Reading from the N-terminus, the 255-residue chain is MNDYIVVKCGGSMLEQLNDVFFDCIKKLQQQYKVVIVHGGGPEIDAKLKDCNINVEKRDGLRVTPKEVMDVVQMVLCGSTNKKFVMNLQKHNLLAVGCSGCDGKLLQVQPVSEEIGYVGEVSYVETALLKGLINMNYIPVIAPIGIHDNEIYNINADTAAAGIAAALSAKELILITDVDGILHEGKLVKKTDESEIATLIEKGVITGGMIPKVQAALASLKMGVQKISIVNGTKDFTEDTGECIGMTVTRGVSIV.

Substrate contacts are provided by residues 40–41, Arg62, and Asn153; that span reads GG.

Belongs to the acetylglutamate kinase family. ArgB subfamily.

The protein resides in the cytoplasm. The catalysed reaction is N-acetyl-L-glutamate + ATP = N-acetyl-L-glutamyl 5-phosphate + ADP. It functions in the pathway amino-acid biosynthesis; L-arginine biosynthesis; N(2)-acetyl-L-ornithine from L-glutamate: step 2/4. Its function is as follows. Catalyzes the ATP-dependent phosphorylation of N-acetyl-L-glutamate. The polypeptide is Acetylglutamate kinase (Bacillus anthracis (strain A0248)).